Consider the following 114-residue polypeptide: Small ribosomal subunit protein bS6 (114 aa).

This sequence belongs to the bacterial ribosomal protein bS6 family.

In terms of biological role, binds together with bS18 to 16S ribosomal RNA. This Thermosynechococcus vestitus (strain NIES-2133 / IAM M-273 / BP-1) protein is Small ribosomal subunit protein bS6.